Consider the following 644-residue polypeptide: 1-deoxy-D-xylulose-5-phosphate synthase (644 aa).

Thiamine diphosphate-binding positions include His84 and 125-127; that span reads GHS. A Mg(2+)-binding site is contributed by Asp156. Thiamine diphosphate-binding positions include 157–158, Asn185, Tyr296, and Glu378; that span reads GA. Mg(2+) is bound at residue Asn185.

The protein belongs to the transketolase family. DXPS subfamily. In terms of assembly, homodimer. It depends on Mg(2+) as a cofactor. Requires thiamine diphosphate as cofactor.

The enzyme catalyses D-glyceraldehyde 3-phosphate + pyruvate + H(+) = 1-deoxy-D-xylulose 5-phosphate + CO2. The protein operates within metabolic intermediate biosynthesis; 1-deoxy-D-xylulose 5-phosphate biosynthesis; 1-deoxy-D-xylulose 5-phosphate from D-glyceraldehyde 3-phosphate and pyruvate: step 1/1. In terms of biological role, catalyzes the acyloin condensation reaction between C atoms 2 and 3 of pyruvate and glyceraldehyde 3-phosphate to yield 1-deoxy-D-xylulose-5-phosphate (DXP). The sequence is that of 1-deoxy-D-xylulose-5-phosphate synthase from Paramagnetospirillum magneticum (strain ATCC 700264 / AMB-1) (Magnetospirillum magneticum).